A 166-amino-acid chain; its full sequence is Disulfide bond formation protein B (166 aa).

Over Met-1 to Thr-12 the chain is Cytoplasmic. A helical transmembrane segment spans residues Ala-13 to Tyr-29. Topologically, residues Met-30–Ile-47 are periplasmic. Cys-39 and Cys-42 form a disulfide bridge. A helical membrane pass occupies residues Phe-48–Pro-64. At Ala-65–Lys-70 the chain is on the cytoplasmic side. The chain crosses the membrane as a helical span at residues Val-71 to Ala-88. At Arg-89–Gly-145 the chain is on the periplasmic side. A disulfide bond links Cys-104 and Cys-131. The helical transmembrane segment at Trp-146–Arg-164 threads the bilayer. Topologically, residues Lys-165–Ala-166 are cytoplasmic.

The protein belongs to the DsbB family.

It is found in the cell inner membrane. Its function is as follows. Required for disulfide bond formation in some periplasmic proteins. Acts by oxidizing the DsbA protein. This chain is Disulfide bond formation protein B, found in Saccharophagus degradans (strain 2-40 / ATCC 43961 / DSM 17024).